Reading from the N-terminus, the 464-residue chain is CRISPR system endoribonuclease Csm6 (464 aa).

The segment at 1–190 (MEDLDALWER…LRILPNPHEA (190 aa)) is CARF domain. Residues 191 to 464 (LAEVDALFAK…LSPEPVPLGF (274 aa)) are HEPN domain.

Belongs to the CRISPR-associated Csm6 family. Homodimer. The protein forms a twisted, head-to-head dimer; the composite ssRNase active site is formed at the dimer interface. Does not require a metal cofactor. is required as a cofactor.

Its activity is regulated as follows. Non-specific ssRNase activity is allosterically activated about 1000-fold by cyclic tetraadenylate (cA4), which probably binds to its CARF domain. CRISPR (clustered regularly interspaced short palindromic repeat) is an adaptive immune system that provides protection against mobile genetic elements (viruses, transposable elements and conjugative plasmids). CRISPR clusters contain spacers, sequences complementary to antecedent mobile elements, and target invading nucleic acids. CRISPR clusters are transcribed and processed into CRISPR RNA (crRNA). The type III-A Csm effector complex binds crRNA and acts as a crRNA-guided RNase, DNase and cyclic oligoadenylate synthase; binding of target RNA cognate to the crRNA is required for all activities. This protein is not part of the Csm effector complex. In terms of biological role, a single-strand-specific endoribonuclease (ssRNase) producing free 5'-OH. Activity is approximately 1000-fold stimulated by cyclic oligoadenylate (cOA); only cyclic tetraadenylate (cA4) stimulates the ssRNase activity while linear oligoadenylates do not activate the RNase. Another study showed stimulation by linear tetraadenylate at very high concentrations, but did not examine stimulation by cA4. The sequence is that of CRISPR system endoribonuclease Csm6 from Thermus thermophilus (strain ATCC 27634 / DSM 579 / HB8).